The primary structure comprises 224 residues: UPF0758 protein PM1152 (224 aa).

The MPN domain occupies 102–224; sequence AFKNSENVRF…YYSFAENRLL (123 aa). The Zn(2+) site is built by His-173, His-175, and Asp-186. Positions 173–186 match the JAMM motif motif; sequence HNHPSGNPEPSASD.

Belongs to the UPF0758 family.

The sequence is that of UPF0758 protein PM1152 from Pasteurella multocida (strain Pm70).